We begin with the raw amino-acid sequence, 574 residues long: Serine/threonine-protein kinase B (574 aa).

Residues 34–301 (YQTLGLLGKG…VLDALEMPTY (268 aa)) enclose the Protein kinase domain. ATP contacts are provided by residues 40-48 (LGKGGFGAT) and lysine 65. Aspartate 163 (proton acceptor) is an active-site residue. A disordered region spans residues 319-407 (GAGDEPATGI…GGSVGAGGID (89 aa)). Over residues 343 to 364 (TRFNTNVQPRDPSSTSLNTGIK) the composition is skewed to polar residues. Pentapeptide repeat domains are found at residues 454–493 (QNLV…DFGK) and 504–543 (ANLS…NFSG).

This sequence belongs to the protein kinase superfamily. Ser/Thr protein kinase family. Autophosphorylated.

The enzyme catalyses L-seryl-[protein] + ATP = O-phospho-L-seryl-[protein] + ADP + H(+). It carries out the reaction L-threonyl-[protein] + ATP = O-phospho-L-threonyl-[protein] + ADP + H(+). Protein kinase required for cell motility, but not for phototaxis. This Synechocystis sp. (strain ATCC 27184 / PCC 6803 / Kazusa) protein is Serine/threonine-protein kinase B (spkB).